Consider the following 158-residue polypeptide: SsrA-binding protein (158 aa).

The protein belongs to the SmpB family.

The protein resides in the cytoplasm. Required for rescue of stalled ribosomes mediated by trans-translation. Binds to transfer-messenger RNA (tmRNA), required for stable association of tmRNA with ribosomes. tmRNA and SmpB together mimic tRNA shape, replacing the anticodon stem-loop with SmpB. tmRNA is encoded by the ssrA gene; the 2 termini fold to resemble tRNA(Ala) and it encodes a 'tag peptide', a short internal open reading frame. During trans-translation Ala-aminoacylated tmRNA acts like a tRNA, entering the A-site of stalled ribosomes, displacing the stalled mRNA. The ribosome then switches to translate the ORF on the tmRNA; the nascent peptide is terminated with the 'tag peptide' encoded by the tmRNA and targeted for degradation. The ribosome is freed to recommence translation, which seems to be the essential function of trans-translation. The protein is SsrA-binding protein of Caldanaerobacter subterraneus subsp. tengcongensis (strain DSM 15242 / JCM 11007 / NBRC 100824 / MB4) (Thermoanaerobacter tengcongensis).